We begin with the raw amino-acid sequence, 227 residues long: Ribonuclease 3 (227 aa).

Positions 4–133 constitute an RNase III domain; sequence FETLEKLLSY…LIAAIYLDSN (130 aa). Glu46 lines the Mg(2+) pocket. Residue Asp50 is part of the active site. Mg(2+)-binding residues include Asn119 and Glu122. Glu122 is an active-site residue. One can recognise a DRBM domain in the interval 158–226; it reads DPKTALQEWA…ARSLLHRLKN (69 aa).

Belongs to the ribonuclease III family. In terms of assembly, homodimer. Mg(2+) is required as a cofactor.

It is found in the cytoplasm. The enzyme catalyses Endonucleolytic cleavage to 5'-phosphomonoester.. Digests double-stranded RNA. Involved in the processing of primary rRNA transcript to yield the immediate precursors to the large and small rRNAs (23S and 16S). Processes some mRNAs, and tRNAs when they are encoded in the rRNA operon. Processes pre-crRNA and tracrRNA of type II CRISPR loci if present in the organism. This chain is Ribonuclease 3, found in Rickettsia massiliae (strain Mtu5).